Here is a 704-residue protein sequence, read N- to C-terminus: Phosphoribosylformylglycinamidine synthase subunit PurL (704 aa).

H32 is an active-site residue. Y35 contributes to the ATP binding site. Residue E76 coordinates Mg(2+). Residues 77–80 (SHNH) and R99 contribute to the substrate site. The active-site Proton acceptor is the H78. D100 lines the Mg(2+) pocket. Q224 is a substrate binding site. D252 provides a ligand contact to Mg(2+). 296–298 (ESQ) lines the substrate pocket. D471 and G508 together coordinate ATP. N509 is a Mg(2+) binding site. S511 contributes to the substrate binding site.

It belongs to the FGAMS family. In terms of assembly, monomer. Part of the FGAM synthase complex composed of 1 PurL, 1 PurQ and 2 PurS subunits.

It is found in the cytoplasm. It carries out the reaction N(2)-formyl-N(1)-(5-phospho-beta-D-ribosyl)glycinamide + L-glutamine + ATP + H2O = 2-formamido-N(1)-(5-O-phospho-beta-D-ribosyl)acetamidine + L-glutamate + ADP + phosphate + H(+). Its pathway is purine metabolism; IMP biosynthesis via de novo pathway; 5-amino-1-(5-phospho-D-ribosyl)imidazole from N(2)-formyl-N(1)-(5-phospho-D-ribosyl)glycinamide: step 1/2. Its function is as follows. Part of the phosphoribosylformylglycinamidine synthase complex involved in the purines biosynthetic pathway. Catalyzes the ATP-dependent conversion of formylglycinamide ribonucleotide (FGAR) and glutamine to yield formylglycinamidine ribonucleotide (FGAM) and glutamate. The FGAM synthase complex is composed of three subunits. PurQ produces an ammonia molecule by converting glutamine to glutamate. PurL transfers the ammonia molecule to FGAR to form FGAM in an ATP-dependent manner. PurS interacts with PurQ and PurL and is thought to assist in the transfer of the ammonia molecule from PurQ to PurL. The sequence is that of Phosphoribosylformylglycinamidine synthase subunit PurL from Pyrococcus furiosus (strain ATCC 43587 / DSM 3638 / JCM 8422 / Vc1).